The sequence spans 285 residues: Nucleotide-binding protein PFL_0912 (285 aa).

Residue 8-15 (GRSGSGKS) coordinates ATP. Residue 60-63 (DARN) coordinates GTP.

The protein belongs to the RapZ-like family.

In terms of biological role, displays ATPase and GTPase activities. The protein is Nucleotide-binding protein PFL_0912 of Pseudomonas fluorescens (strain ATCC BAA-477 / NRRL B-23932 / Pf-5).